Here is an 835-residue protein sequence, read N- to C-terminus: Protein translocase subunit SecA 1 (835 aa).

ATP contacts are provided by residues Q85, 103 to 107 (GEGKT), and D492. The disordered stretch occupies residues 788-807 (VQGEAVHPSSDGEEAKKKPV). The Zn(2+) site is built by C819, C821, C830, and C831.

Belongs to the SecA family. Monomer and homodimer. Part of the essential Sec protein translocation apparatus which comprises SecA, SecYEG and auxiliary proteins SecDF. Other proteins may also be involved. It depends on Zn(2+) as a cofactor.

It localises to the cell membrane. The protein resides in the cytoplasm. The enzyme catalyses ATP + H2O + cellular proteinSide 1 = ADP + phosphate + cellular proteinSide 2.. In terms of biological role, part of the Sec protein translocase complex. Interacts with the SecYEG preprotein conducting channel. Has a central role in coupling the hydrolysis of ATP to the transfer of proteins into and across the cell membrane, serving as an ATP-driven molecular motor driving the stepwise translocation of polypeptide chains across the membrane. The chain is Protein translocase subunit SecA 1 from Bacillus thuringiensis (strain Al Hakam).